Here is a 188-residue protein sequence, read N- to C-terminus: uncharacterized protein (188 aa).

Residues 136–156 (TLVKLLLLFLSLMVVIVGVWW) form a helical membrane-spanning segment.

Its subcellular location is the host membrane. This is an uncharacterized protein from Magallana gigas (Pacific oyster).